Here is a 306-residue protein sequence, read N- to C-terminus: Protoheme IX farnesyltransferase (306 aa).

Helical transmembrane passes span 31 to 50 (VIELLLVTTAPVMILAQGGW), 55 to 77 (LILGVLVGGTLSAGSANAFNCYI), 104 to 124 (LVFAWIIGVASIVWLGVISNW), 125 to 145 (LAAALSLAAILFYVFVYTLWL), 168 to 188 (WAAVTGDISWAPVILFMIVFL), 218 to 235 (GRAAVGLQTILYAWATLA), 238 to 258 (LLLIPVAGMGLVYTLAALAGG), and 286 to 306 (ASISYLSLLFLAVGIDPLLPF).

Belongs to the UbiA prenyltransferase family. Protoheme IX farnesyltransferase subfamily.

The protein localises to the cell membrane. The catalysed reaction is heme b + (2E,6E)-farnesyl diphosphate + H2O = Fe(II)-heme o + diphosphate. Its pathway is porphyrin-containing compound metabolism; heme O biosynthesis; heme O from protoheme: step 1/1. In terms of biological role, converts heme B (protoheme IX) to heme O by substitution of the vinyl group on carbon 2 of heme B porphyrin ring with a hydroxyethyl farnesyl side group. The protein is Protoheme IX farnesyltransferase of Clavibacter michiganensis subsp. michiganensis (strain NCPPB 382).